The primary structure comprises 199 residues: UPF0637 protein LVIS_1261 (199 aa).

It belongs to the UPF0637 family.

This chain is UPF0637 protein LVIS_1261, found in Levilactobacillus brevis (strain ATCC 367 / BCRC 12310 / CIP 105137 / JCM 1170 / LMG 11437 / NCIMB 947 / NCTC 947) (Lactobacillus brevis).